The sequence spans 435 residues: UPF0053 protein Rv2366c (435 aa).

Residues 1–185 (MTGYYQLLGS…QQRGVVAADE (185 aa)) enclose the CNNM transmembrane domain. Transmembrane regions (helical) follow at residues 7-27 (LLGS…DAAI) and 89-109 (VWGL…VVGV). CBS domains are found at residues 204–267 (MVPR…GRET) and 272–329 (VMRP…IADE).

It belongs to the UPF0053 family.

Its subcellular location is the cell membrane. The chain is UPF0053 protein Rv2366c from Mycobacterium tuberculosis (strain ATCC 25618 / H37Rv).